The sequence spans 157 residues: ATP synthase subunit b (157 aa).

A helical transmembrane segment spans residues 7–29 (MFGQLIMFTMFTWFCMKFVWPPI).

Belongs to the ATPase B chain family. F-type ATPases have 2 components, F(1) - the catalytic core - and F(0) - the membrane proton channel. F(1) has five subunits: alpha(3), beta(3), gamma(1), delta(1), epsilon(1). F(0) has three main subunits: a(1), b(2) and c(10-14). The alpha and beta chains form an alternating ring which encloses part of the gamma chain. F(1) is attached to F(0) by a central stalk formed by the gamma and epsilon chains, while a peripheral stalk is formed by the delta and b chains.

The protein localises to the cell inner membrane. In terms of biological role, f(1)F(0) ATP synthase produces ATP from ADP in the presence of a proton or sodium gradient. F-type ATPases consist of two structural domains, F(1) containing the extramembraneous catalytic core and F(0) containing the membrane proton channel, linked together by a central stalk and a peripheral stalk. During catalysis, ATP synthesis in the catalytic domain of F(1) is coupled via a rotary mechanism of the central stalk subunits to proton translocation. Functionally, component of the F(0) channel, it forms part of the peripheral stalk, linking F(1) to F(0). The polypeptide is ATP synthase subunit b (Ruthia magnifica subsp. Calyptogena magnifica).